The following is a 579-amino-acid chain: Small conductance calcium-activated potassium channel protein 2 (579 aa).

Disordered regions lie at residues 1–54 and 90–115; these read MSSC…AAAA and TGGG…KKNQ. The span at 90-103 shows a compositional bias: gly residues; it reads TGGGGGGGGSGHGS. A helical transmembrane segment spans residues 138 to 158; that stretch reads ALIFGMFGIVVMVIETELSWG. Y160 carries the post-translational modification Phosphotyrosine. A helical membrane pass occupies residues 168 to 188; that stretch reads LALKCLISLSTIILLGLIIVY. Residues 214–234 form a helical membrane-spanning segment; that stretch reads IFFICLEILVCAIHPIPGNYT. The chain crosses the membrane as a helical span at residues 256-276; the sequence is IILSIPMFLRLYLIARVMLLH. A helical transmembrane segment spans residues 305-325; sequence LMTICPGTVLLVFSISLWIIA. Residues 345 to 365 constitute an intramembrane region (pore-forming); the sequence is FLGAMWLISITFLSIGYGDMV. Residues 374 to 394 form a helical membrane-spanning segment; it reads VCLLTGIMGAGCTALVVAVVA. The calmodulin-binding stretch occupies residues 412–488; sequence DTQLTKRVKN…LVDLAKTQNI (77 aa). Positions 551–579 are disordered; that stretch reads VTYNAERSRSSSRRRRSSSTAPPTSSESS. Over residues 568–579 the composition is skewed to low complexity; it reads SSTAPPTSSESS.

It belongs to the potassium channel KCNN family. KCa2.2/KCNN2 subfamily. As to quaternary structure, homodimer. Heteromultimer with KCNN1 and KCNN3. The complex is composed of 4 channel subunits each of which binds to a calmodulin subunit which regulates the channel activity through calcium-binding. Interacts (via N-terminal domain) with MPP2. As to expression, expressed in atrial myocytes (at protein level). Widely expressed.

The protein resides in the membrane. It is found in the cytoplasm. Its subcellular location is the myofibril. It localises to the sarcomere. The protein localises to the z line. The catalysed reaction is K(+)(in) = K(+)(out). With respect to regulation, inhibited by bee venom neurotoxin apamin. Inhibited by UCL 1684 and tetraethylammonium (TEA). Functionally, small conductance calcium-activated potassium channel that mediates the voltage-independent transmembrane transfer of potassium across the cell membrane through a constitutive interaction with calmodulin which binds the intracellular calcium allowing its opening. The current is characterized by a voltage-independent activation, an intracellular calcium concentration increase-dependent activation and a single-channel conductance of about 3 picosiemens. Also presents an inwardly rectifying current, thus reducing its already small outward conductance of potassium ions, which is particularly the case when the membrane potential displays positive values, above + 20 mV. The inward rectification could be due to a blockade of the outward current by intracellular divalent cations such as calcium and magnesium and could also be due to an intrinsic property of the channel pore, independent of intracellular divalent ions. There are three positively charged amino acids in the S6 transmembrane domain, close to the pore, that collectively control the conductance and rectification through an electrostatic mechanism. Additionally, electrostatic contributions from these residues also play an important role in determining the intrinsic open probability of the channel in the absence of calcium, affecting the apparent calcium affinity for activation. Forms an heteromeric complex with calmodulin, which is constitutively associated in a calcium-independent manner. Channel opening is triggered when calcium binds the calmodulin resulting in a rotary movement leading to the formation of the dimeric complex to open the gate. Plays a role in the repolarization phase of cardiac action potential. This Homo sapiens (Human) protein is Small conductance calcium-activated potassium channel protein 2.